A 345-amino-acid polypeptide reads, in one-letter code: Glycerol-3-phosphate dehydrogenase [NAD(P)+] (345 aa).

NADPH is bound by residues S11, W12, H32, R33, and K106. The sn-glycerol 3-phosphate site is built by K106, G137, and S139. A141 is an NADPH binding site. K192, D245, S255, R256, and N257 together coordinate sn-glycerol 3-phosphate. K192 (proton acceptor) is an active-site residue. R256 serves as a coordination point for NADPH. NADPH-binding residues include V280 and E282.

It belongs to the NAD-dependent glycerol-3-phosphate dehydrogenase family.

The protein resides in the cytoplasm. The catalysed reaction is sn-glycerol 3-phosphate + NAD(+) = dihydroxyacetone phosphate + NADH + H(+). It catalyses the reaction sn-glycerol 3-phosphate + NADP(+) = dihydroxyacetone phosphate + NADPH + H(+). The protein operates within membrane lipid metabolism; glycerophospholipid metabolism. With respect to regulation, does not seem to be inhibited by sn-glycerol 3-phosphate, in contrast to the E.coli homolog enzyme which is very sensitive to allosteric inhibition by G3P. Catalyzes the reduction of the glycolytic intermediate dihydroxyacetone phosphate (DHAP) to sn-glycerol 3-phosphate (G3P), the key precursor for phospholipid synthesis. The protein is Glycerol-3-phosphate dehydrogenase [NAD(P)+] of Bacillus subtilis (strain 168).